Reading from the N-terminus, the 176-residue chain is Endothelin-2 (176 aa).

An N-terminal signal peptide occupies residues 1 to 22 (MVSPAWCSIALALLLALHEGKG). Positions 23 to 44 (QAAATMEQPASAPKGRGPHLRF) are excised as a propeptide. Cystine bridges form between Cys47–Cys61 and Cys49–Cys57. A propeptide spanning residues 68–176 (VNTAGQTAPY…IPAHSRRRKR (109 aa)) is cleaved from the precursor. The tract at residues 94–109 (CECSSAGDSACATFCH) is endothelin-like.

Belongs to the endothelin/sarafotoxin family.

The protein resides in the secreted. Its function is as follows. Vasoconstrictor. This Rattus norvegicus (Rat) protein is Endothelin-2 (Edn2).